The chain runs to 146 residues: MNEELQNQFMALDVYNQQVQKLQEELSNIDLMIMELVRAIESMESLKTSGEIMLPLGAGSFVKADVKNPEKIILSVGVDVLLEKDVEEVILDFKNSLDELEKTKELITTQIQKTSKEVTRIRGELEKRAAAIEKQSQTKRGHSGSN.

It belongs to the prefoldin alpha subunit family. As to quaternary structure, heterohexamer of two alpha and four beta subunits.

Its subcellular location is the cytoplasm. Functionally, molecular chaperone capable of stabilizing a range of proteins. Seems to fulfill an ATP-independent, HSP70-like function in archaeal de novo protein folding. This Methanococcus vannielii (strain ATCC 35089 / DSM 1224 / JCM 13029 / OCM 148 / SB) protein is Prefoldin subunit alpha.